The following is a 540-amino-acid chain: Solute carrier family 22 member 7 (540 aa).

The next 12 membrane-spanning stretches (helical) occupy residues 21 to 41 (LVLLALPRFLLPMHFLLPIFM), 144 to 164 (VTSTCFFIGVLLGAVVYGYLS), 172 to 192 (LLLVAYVSTLALGLMSAASVN), 202 to 222 (LTGSALAGFTIIVLPLELEWL), 232 to 252 (VISTTFWTGGVLLLTLVGYLI), 257 to 277 (WLLLAATLPCVPGIISIWWVP), 344 to 364 (VSLCCMMMWFGVNFSYYGLTL), 378 to 398 (LLFGAVEVPSKITVFFLVRLV), 402 to 422 (LTEAGMLLATALTFGISLLVS), 429 to 449 (ITALVVIGKAFSEAAFTTAYL), 462 to 484 (TGMGFTALIGRLGASLAPLVVLL), and 488 to 510 (WLLLPKLAYGGISFLAACTVLLL).

It belongs to the major facilitator (TC 2.A.1) superfamily. Organic cation transporter (TC 2.A.1.19) family. As to expression, abundant expression in male and female kidney. In kidney, expressed at the brush border of the proximal tubule S3 segment (S3) in the outer stripe and medullary rays. In kidney, expression is higher in female than male. Also expressed in female liver.

The protein localises to the basolateral cell membrane. It localises to the apical cell membrane. Its subcellular location is the cell membrane. It carries out the reaction orotate(out) + L-glutamate(in) = orotate(in) + L-glutamate(out). The enzyme catalyses 3',5'-cyclic GMP(in) = 3',5'-cyclic GMP(out). The catalysed reaction is GMP(in) = GMP(out). It catalyses the reaction 2'-deoxyguanosine(in) = 2'-deoxyguanosine(out). It carries out the reaction GDP(in) = GDP(out). The enzyme catalyses guanosine(in) = guanosine(out). The catalysed reaction is GTP(in) = GTP(out). It catalyses the reaction 3',5'-cyclic AMP(in) = 3',5'-cyclic AMP(out). It carries out the reaction creatinine(in) = creatinine(out). The enzyme catalyses prostaglandin E2(out) = prostaglandin E2(in). The catalysed reaction is 2-oxoglutarate(in) = 2-oxoglutarate(out). It catalyses the reaction glutarate(in) = glutarate(out). It carries out the reaction urate(out) = urate(in). The enzyme catalyses estrone 3-sulfate(out) = estrone 3-sulfate(in). Functionally, functions as a Na(+)-independent bidirectional multispecific transporter. Contributes to the renal and hepatic elimination of endogenous organic compounds from the systemic circulation into the urine and bile, respectively. Capable of transporting a wide range of purine and pyrimidine nucleobases, nucleosides, and nucleotides with cGMP, 2'deoxyguanosine and GMP being the preferred substrates. Functions as a pH- and chloride-independent cGMP bidirectional facilitative transporter that can regulate both intracellular and extracellular levels of cGMP and may be involved in cGMP signaling pathways. Mediates orotate/glutamate bidirectional exchange and most likely display a physiological role in hepatic release of glutamate into the blood. Involved in renal secretion and possible reabsorption of creatinine. Able to uptake prostaglandin E2 (PGE2) and may contribute to PGE2 renal excretion. Also transports alpha-ketoglutarate and urate. Unlike human hortolog, able to transport glutarate. Apart from the orotate/glutamate exchange, the counterions for the uptake of other SLC22A7/OAT2 substrates remain to be identified. In Mus musculus (Mouse), this protein is Solute carrier family 22 member 7.